We begin with the raw amino-acid sequence, 284 residues long: 2-dehydro-3-deoxyphosphooctonate aldolase (284 aa).

This sequence belongs to the KdsA family.

Its subcellular location is the cytoplasm. The catalysed reaction is D-arabinose 5-phosphate + phosphoenolpyruvate + H2O = 3-deoxy-alpha-D-manno-2-octulosonate-8-phosphate + phosphate. The protein operates within carbohydrate biosynthesis; 3-deoxy-D-manno-octulosonate biosynthesis; 3-deoxy-D-manno-octulosonate from D-ribulose 5-phosphate: step 2/3. It functions in the pathway bacterial outer membrane biogenesis; lipopolysaccharide biosynthesis. The chain is 2-dehydro-3-deoxyphosphooctonate aldolase from Pectobacterium carotovorum subsp. carotovorum (strain PC1).